The chain runs to 355 residues: Protein RecA (355 aa).

67 to 74 (GPESSGKT) serves as a coordination point for ATP.

The protein belongs to the RecA family.

It is found in the cytoplasm. Functionally, can catalyze the hydrolysis of ATP in the presence of single-stranded DNA, the ATP-dependent uptake of single-stranded DNA by duplex DNA, and the ATP-dependent hybridization of homologous single-stranded DNAs. It interacts with LexA causing its activation and leading to its autocatalytic cleavage. The polypeptide is Protein RecA (Shewanella amazonensis (strain ATCC BAA-1098 / SB2B)).